Consider the following 119-residue polypeptide: Phosphoribosyl-AMP cyclohydrolase (119 aa).

Asp-77 lines the Mg(2+) pocket. Residue Cys-78 coordinates Zn(2+). 2 residues coordinate Mg(2+): Asp-79 and Asp-81. Positions 94 and 101 each coordinate Zn(2+).

The protein belongs to the PRA-CH family. In terms of assembly, homodimer. The cofactor is Mg(2+). Zn(2+) is required as a cofactor.

It is found in the cytoplasm. It carries out the reaction 1-(5-phospho-beta-D-ribosyl)-5'-AMP + H2O = 1-(5-phospho-beta-D-ribosyl)-5-[(5-phospho-beta-D-ribosylamino)methylideneamino]imidazole-4-carboxamide. The protein operates within amino-acid biosynthesis; L-histidine biosynthesis; L-histidine from 5-phospho-alpha-D-ribose 1-diphosphate: step 3/9. Catalyzes the hydrolysis of the adenine ring of phosphoribosyl-AMP. This chain is Phosphoribosyl-AMP cyclohydrolase, found in Cereibacter sphaeroides (strain KD131 / KCTC 12085) (Rhodobacter sphaeroides).